We begin with the raw amino-acid sequence, 475 residues long: Ribulose bisphosphate carboxylase large chain (475 aa).

Residues 1–2 (MS) constitute a propeptide that is removed on maturation. Proline 3 is subject to N-acetylproline. Lysine 14 bears the N6,N6,N6-trimethyllysine mark. Substrate contacts are provided by asparagine 123 and threonine 173. The Proton acceptor role is filled by lysine 175. Lysine 177 provides a ligand contact to substrate. 3 residues coordinate Mg(2+): lysine 201, aspartate 203, and glutamate 204. The residue at position 201 (lysine 201) is an N6-carboxylysine. Histidine 294 serves as the catalytic Proton acceptor. 3 residues coordinate substrate: arginine 295, histidine 327, and serine 379.

This sequence belongs to the RuBisCO large chain family. Type I subfamily. As to quaternary structure, heterohexadecamer of 8 large chains and 8 small chains; disulfide-linked. The disulfide link is formed within the large subunit homodimers. Mg(2+) is required as a cofactor. In terms of processing, the disulfide bond which can form in the large chain dimeric partners within the hexadecamer appears to be associated with oxidative stress and protein turnover.

Its subcellular location is the plastid. It is found in the chloroplast. It carries out the reaction 2 (2R)-3-phosphoglycerate + 2 H(+) = D-ribulose 1,5-bisphosphate + CO2 + H2O. The catalysed reaction is D-ribulose 1,5-bisphosphate + O2 = 2-phosphoglycolate + (2R)-3-phosphoglycerate + 2 H(+). In terms of biological role, ruBisCO catalyzes two reactions: the carboxylation of D-ribulose 1,5-bisphosphate, the primary event in carbon dioxide fixation, as well as the oxidative fragmentation of the pentose substrate in the photorespiration process. Both reactions occur simultaneously and in competition at the same active site. In Chlorokybus atmophyticus (Soil alga), this protein is Ribulose bisphosphate carboxylase large chain.